We begin with the raw amino-acid sequence, 402 residues long: Multidrug resistance protein MdtH (402 aa).

Over 1–12 (MSRVSQARNLGK) the chain is Cytoplasmic. Residues 13-33 (YFLLIDNMLVVLGFFVVFPLI) form a helical membrane-spanning segment. Residues 34–98 (SIRFVDQMGW…GFATMGIAHE (65 aa)) lie on the Periplasmic side of the membrane. The helical transmembrane segment at 99–116 (PWLLWFSCLLSGLGGTLF) threads the bilayer. At 117 to 138 (DPPRSALVVKLIRPQQRGRFFS) the chain is on the cytoplasmic side. The chain crosses the membrane as a helical span at residues 139-159 (LLMMQDSASAVIGALLGSWLL). Topologically, residues 160-164 (QYDFR) are periplasmic. A helical membrane pass occupies residues 165 to 185 (LVCATGAVLFVLCAAFNAWLL). Topologically, residues 186-213 (PAWKLSTVRTPVREGMTRVMRDKRFVTY) are cytoplasmic. A helical transmembrane segment spans residues 214 to 234 (VLTLAGYYMLAVQVMLMLPIM). At 235-243 (VNDVAGAPS) the chain is on the periplasmic side. The helical transmembrane segment at 244 to 264 (AVKWMYAIEACLSLTLLYPIA) threads the bilayer. At 265 to 276 (RWSEKHFRLEHR) the chain is on the cytoplasmic side. Residues 277–297 (LMAGLLIMSLSMMPVGMVSGL) form a helical membrane-spanning segment. Over 298-299 (QQ) the chain is Periplasmic. A helical transmembrane segment spans residues 300 to 320 (LFTLICLFYIGSIIAEPARET). The Cytoplasmic portion of the chain corresponds to 321-339 (LSASLADARARGSYMGFSR). A helical transmembrane segment spans residues 340–360 (LGLAIGGAIGYIGGGWLFDLG). Topologically, residues 361 to 367 (KSAHQPE) are periplasmic. Residues 368–388 (LPWMMLGIIGIFTFLALGWQF) form a helical membrane-spanning segment. Over 389 to 402 (SQKRAARRLLERDA) the chain is Cytoplasmic.

This sequence belongs to the major facilitator superfamily. DHA1 family. MdtH (TC 2.A.1.2.21) subfamily.

It is found in the cell inner membrane. The chain is Multidrug resistance protein MdtH from Shigella flexneri.